A 342-amino-acid chain; its full sequence is MRLSIVTTMYMSEPYVLEFYRRARAAADKITPDVEIIFVDDGSPDAALQQAVSLLDSDPCVRVIQLSRNFGHHKAMMTGLAHATGDLVFLIDSDLEEDPALLEPFYEKLISTGADVVFGCHARRPGGWLRNFGPKIHYRASALLCDPPLHENTLTVRLMTADYVRSLVQHQERELSIAGLWQITGFYQVPMSVNKAWKGTTTYTFRRKVATLVDNVTSFSNKPLVFIFYLGAAIFIISSSAAGYLIIDRIFFRALQAGWASVIVSIWMLGGVTIFCIGLVGIYVSKVFIETKQRPYTIIRRIYGSDLTTREPSSLKTAFPAAHLSNGKRVTSEPEGLATGNR.

2 helical membrane-spanning segments follow: residues 227–247 (IFYLGAAIFIISSSAAGYLII) and 262–282 (VIVSIWMLGGVTIFCIGLVGI).

It belongs to the glycosyltransferase 2 family.

The protein resides in the cell membrane. In terms of biological role, may play only a redundant role in maintaining cell wall viability and bacterial virulence. This is Putative glycosyltransferases (pimF) from Mycobacterium tuberculosis (strain CDC 1551 / Oshkosh).